A 233-amino-acid polypeptide reads, in one-letter code: Leucyl/phenylalanyl-tRNA--protein transferase (233 aa).

Belongs to the L/F-transferase family.

The protein resides in the cytoplasm. It catalyses the reaction N-terminal L-lysyl-[protein] + L-leucyl-tRNA(Leu) = N-terminal L-leucyl-L-lysyl-[protein] + tRNA(Leu) + H(+). The enzyme catalyses N-terminal L-arginyl-[protein] + L-leucyl-tRNA(Leu) = N-terminal L-leucyl-L-arginyl-[protein] + tRNA(Leu) + H(+). It carries out the reaction L-phenylalanyl-tRNA(Phe) + an N-terminal L-alpha-aminoacyl-[protein] = an N-terminal L-phenylalanyl-L-alpha-aminoacyl-[protein] + tRNA(Phe). Functionally, functions in the N-end rule pathway of protein degradation where it conjugates Leu, Phe and, less efficiently, Met from aminoacyl-tRNAs to the N-termini of proteins containing an N-terminal arginine or lysine. The protein is Leucyl/phenylalanyl-tRNA--protein transferase of Desulfatibacillum aliphaticivorans.